Reading from the N-terminus, the 224-residue chain is uncharacterized protein (224 aa).

The N-terminal stretch at 1-23 is a signal peptide; the sequence is MKKLLAAGIIGLLTVSIASPSFA. Residues 31 to 224 form the VWFA domain; sequence NVAVLFDGSG…WEKEAQKFTE (194 aa).

The protein to B.subtilis YwmC.

This is an uncharacterized protein from Bacillus subtilis (strain 168).